Reading from the N-terminus, the 143-residue chain is Histone H2B (143 aa).

The interval 1-52 is disordered; that stretch reads MAPKPASTAGKAPASTASKAPVKSDAAKTASKSKVSSGADGEKKKRKKTRKE. K11 is modified (N6-acetyllysine; alternate). K11 is covalently cross-linked (Glycyl lysine isopeptide (Lys-Gly) (interchain with G-Cter in SUMO); alternate). The residue at position 15 (S15) is a Phosphoserine. The residue at position 19 (K19) is an N6-acetyllysine. Over residues 23–39 the composition is skewed to low complexity; sequence KSDAAKTASKSKVSSGA. K137 is covalently cross-linked (Glycyl lysine isopeptide (Lys-Gly) (interchain with G-Cter in ubiquitin)).

This sequence belongs to the histone H2B family. As to quaternary structure, the nucleosome is a histone octamer containing two molecules each of H2A, H2B, H3 and H4 assembled in one H3-H4 heterotetramer and two H2A-H2B heterodimers. The octamer wraps approximately 147 bp of DNA. In terms of processing, monoubiquitinated to form H2BK123ub1. H2BK123ub1 gives a specific tag for epigenetic transcriptional activation and is also prerequisite for H3K4me and H3K79me formation. H2BK123ub1 also modulates the formation of double-strand breaks during meiosis and is a prerequisite for DNA-damage checkpoint activation. Phosphorylated to form H2BS10ph during progression through meiotic prophase. May be correlated with chromosome condensation. Post-translationally, acetylation of N-terminal lysines and particularly formation of H2BK11ac has a positive effect on transcription. In terms of processing, sumoylation to form H2BK6su occurs preferentially near the telomeres and represses gene transcription.

The protein resides in the nucleus. The protein localises to the chromosome. Core component of nucleosome. Nucleosomes wrap and compact DNA into chromatin, limiting DNA accessibility to the cellular machineries which require DNA as a template. Histones thereby play a central role in transcription regulation, DNA repair, DNA replication and chromosomal stability. DNA accessibility is regulated via a complex set of post-translational modifications of histones, also called histone code, and nucleosome remodeling. This chain is Histone H2B (htbA), found in Agaricus bisporus (White button mushroom).